The sequence spans 100 residues: RNA-binding protein YlxQ (100 aa).

The protein belongs to the eukaryotic ribosomal protein eL8 family.

In terms of biological role, RNA-binding protein that recognizes the K-turn motif present in ribosomal RNA, but also in box C/D and box C'/D' sRNAs. The polypeptide is RNA-binding protein YlxQ (Bacillus subtilis (strain 168)).